The sequence spans 199 residues: Heparin-binding hemagglutinin (199 aa).

The segment covering 162 to 180 (KAAPAKKAAPAKKAAPAKK) has biased composition (low complexity). The interval 162–199 (KAAPAKKAAPAKKAAPAKKAAAKKAPAKKAAAKKVTQK) is disordered. Residues 181–199 (AAAKKAPAKKAAAKKVTQK) show a composition bias toward basic residues.

The protein to M.leprae HbhA. In terms of processing, glycosylated. Glycosylation may protect the protein from proteolytic degradation and be important for hemagglutination. It suggests that the carbohydrate moiety may be located within the C-terminal domain of HbhA.

It is found in the cell surface. Required for extrapulmonary dissemination. Mediates adherence to epithelial cells by binding to sulfated glycoconjugates present at the surface of these cells. The chain is Heparin-binding hemagglutinin (hbhA) from Mycobacterium tuberculosis (strain CDC 1551 / Oshkosh).